A 176-amino-acid chain; its full sequence is Disulfide bond formation protein B (176 aa).

The Cytoplasmic segment spans residues 1–14; the sequence is MLRFLNQCSHGRGA. The helical transmembrane segment at 15 to 31 threads the bilayer; that stretch reads WLLMAFTALALELTALW. The Periplasmic portion of the chain corresponds to 32-49; that stretch reads FQHVMLLKPCVLCIYERC. A disulfide bond links C41 and C44. A helical membrane pass occupies residues 50–65; it reads ALFGVLGAALIGAIAP. Topologically, residues 66–71 are cytoplasmic; the sequence is KTPLRY. Residues 72–89 traverse the membrane as a helical segment; it reads VAMVIWLYSAFRGVQLTY. Over 90–144 the chain is Periplasmic; it reads EHTMLQLYPSPFATCDFMARFPEWLPLDKWVPQVFVASGDCAERQWEFLGLEMPQ. The cysteines at positions 104 and 130 are disulfide-linked. Residues 145-163 traverse the membrane as a helical segment; the sequence is WLLGIFIAYLIVAVLVVIS. Residues 164-176 lie on the Cytoplasmic side of the membrane; that stretch reads QPFKAKKRDLFGR.

This sequence belongs to the DsbB family.

It is found in the cell inner membrane. Required for disulfide bond formation in some periplasmic proteins. Acts by oxidizing the DsbA protein. This chain is Disulfide bond formation protein B, found in Escherichia coli O6:K15:H31 (strain 536 / UPEC).